Consider the following 434-residue polypeptide: UPF0597 protein CLI_2075 (434 aa).

It belongs to the UPF0597 family.

The protein is UPF0597 protein CLI_2075 of Clostridium botulinum (strain Langeland / NCTC 10281 / Type F).